The primary structure comprises 219 residues: Ribose-5-phosphate isomerase A (219 aa).

Substrate is bound by residues 28 to 31 (TGST), 81 to 84 (DGAD), and 94 to 97 (KGGG). E103 (proton acceptor) is an active-site residue. Residue K121 participates in substrate binding.

Belongs to the ribose 5-phosphate isomerase family. As to quaternary structure, homodimer.

The catalysed reaction is aldehydo-D-ribose 5-phosphate = D-ribulose 5-phosphate. It participates in carbohydrate degradation; pentose phosphate pathway; D-ribose 5-phosphate from D-ribulose 5-phosphate (non-oxidative stage): step 1/1. Its function is as follows. Catalyzes the reversible conversion of ribose-5-phosphate to ribulose 5-phosphate. In Salmonella arizonae (strain ATCC BAA-731 / CDC346-86 / RSK2980), this protein is Ribose-5-phosphate isomerase A.